We begin with the raw amino-acid sequence, 50 residues long: MAEKSTVKVDEVKLNLIEMVLRAYDPUYSCAAHIIVKDEKGNKIIEVIKE.

Positions 27 and 30 each coordinate Ni(2+). A non-standard amino acid (selenocysteine) is located at residue U27. The propeptide at 34–50 (IIVKDEKGNKIIEVIKE) is removed in mature form.

Belongs to the [NiFe]/[NiFeSe] hydrogenase large subunit family. As to quaternary structure, the F420-non-reducing hydrogenase vhu is composed of four subunits; VhuA, VhuD, VhuG and VhuU. Ni(2+) is required as a cofactor.

This is F420-non-reducing hydrogenase vhu subunit U (vhuU) from Methanocaldococcus jannaschii (strain ATCC 43067 / DSM 2661 / JAL-1 / JCM 10045 / NBRC 100440) (Methanococcus jannaschii).